The sequence spans 217 residues: Large ribosomal subunit protein uL1 (217 aa).

It belongs to the universal ribosomal protein uL1 family. Part of the 50S ribosomal subunit.

In terms of biological role, binds directly to 23S rRNA. Probably involved in E site tRNA release. Its function is as follows. Protein L1 is also a translational repressor protein, it controls the translation of its operon by binding to its mRNA. The sequence is that of Large ribosomal subunit protein uL1 from Thermoplasma acidophilum (strain ATCC 25905 / DSM 1728 / JCM 9062 / NBRC 15155 / AMRC-C165).